A 271-amino-acid polypeptide reads, in one-letter code: NADPH-dependent 7-cyano-7-deazaguanine reductase (271 aa).

81-83 (IES) is a substrate binding site. 83–84 (SK) contributes to the NADPH binding site. Cysteine 177 (thioimide intermediate) is an active-site residue. Aspartate 184 serves as the catalytic Proton donor. 216–217 (HE) lines the substrate pocket. Residue 245-246 (RG) coordinates NADPH.

The protein belongs to the GTP cyclohydrolase I family. QueF type 2 subfamily. As to quaternary structure, homodimer.

The protein resides in the cytoplasm. The catalysed reaction is 7-aminomethyl-7-carbaguanine + 2 NADP(+) = 7-cyano-7-deazaguanine + 2 NADPH + 3 H(+). It functions in the pathway tRNA modification; tRNA-queuosine biosynthesis. In terms of biological role, catalyzes the NADPH-dependent reduction of 7-cyano-7-deazaguanine (preQ0) to 7-aminomethyl-7-deazaguanine (preQ1). This is NADPH-dependent 7-cyano-7-deazaguanine reductase from Xanthomonas axonopodis pv. citri (strain 306).